We begin with the raw amino-acid sequence, 286 residues long: Probable aquaporin PIP-type pTOM75 (286 aa).

Residues M1 to P35 are disordered. The Cytoplasmic segment spans residues M1–G55. Residues E7–E18 show a composition bias toward basic and acidic residues. Residues I56–L76 traverse the membrane as a helical segment. The Extracellular portion of the chain corresponds to K77–Q89. Residues G90 to S110 traverse the membrane as a helical segment. At G111–A133 the chain is on the cytoplasmic side. An NPA 1 motif is present at residues N115–A117. A helical membrane pass occupies residues V134–F154. Residues M155–K175 are Extracellular-facing. A helical transmembrane segment spans residues G176 to A196. Residues T197 to P209 lie on the Cytoplasmic side of the membrane. Residues I210–I230 traverse the membrane as a helical segment. The Extracellular segment spans residues T231–W257. Residues N236–A238 carry the NPA 2 motif. The chain crosses the membrane as a helical span at residues I258 to I278. Residues R279 to S286 are Cytoplasmic-facing.

The protein belongs to the MIP/aquaporin (TC 1.A.8) family. PIP (TC 1.A.8.11) subfamily. As to expression, roots, ripening fruit and senescing leaves.

The protein resides in the cell membrane. Its function is as follows. Aquaporins facilitate the transport of water and small neutral solutes across cell membranes. The protein is Probable aquaporin PIP-type pTOM75 of Solanum lycopersicum (Tomato).